The primary structure comprises 653 residues: Phospholipid-transporting ATPase VD (653 aa).

Topologically, residues 1 to 375 are cytoplasmic; sequence MACNLCYEAE…GHWCYTRLSN (375 aa). ATP is bound by residues Glu14, Phe56, Lys80, Arg124, Thr204, Gly205, Asp206, 259–266, Arg293, and Lys299; that span reads GLIITGKT. Position 319 (Asp319) interacts with Mg(2+). ATP contacts are provided by Asn322 and Asp323. Asp323 is a binding site for Mg(2+). The helical transmembrane segment at 376 to 396 threads the bilayer; that stretch reads MILYFFYKNVAYVNLLFWYQF. The Exoplasmic loop portion of the chain corresponds to 397-407; that stretch reads FCGFSGTSMTD. A helical transmembrane segment spans residues 408–428; it reads YWVLIFFNLLFTSAPPVIYGV. Residues 429 to 458 are Cytoplasmic-facing; the sequence is LEKDVSAETLMQLPELYKSGQKSEAYLPHT. Residues 459-480 form a helical membrane-spanning segment; sequence FWITLLDAFYQSLVCFFVPYFT. Residues 481 to 487 are Exoplasmic loop-facing; it reads YQGSDID. Residues 488–510 traverse the membrane as a helical segment; the sequence is IFAFGNPLNTAALFIILLHLIIE. The Cytoplasmic segment spans residues 511–516; it reads SKSLTW. The helical transmembrane segment at 517–537 threads the bilayer; sequence IHMLVITGSILSYFLFAIVFG. Residues 538–555 lie on the Exoplasmic loop side of the membrane; sequence AMCVTCNPPSNPYWIMQE. The chain crosses the membrane as a helical span at residues 556 to 580; the sequence is HVLDPVFYLVCILTTCIALLPRFVY. The Cytoplasmic segment spans residues 581-653; the sequence is RGAGKMNQVT…AFEMARPCKD (73 aa).

The protein belongs to the cation transport ATPase (P-type) (TC 3.A.3) family. Type IV subfamily. Component of a P4-ATPase flippase complex which consists of a catalytic alpha subunit ATP10A and an accessory beta subunit TMEM30A. The cofactor is Mg(2+). Autophosphorylated at the conserved aspartate of the P-type ATPase signature sequence.

It localises to the cell membrane. The protein localises to the endoplasmic reticulum membrane. The catalysed reaction is ATP + H2O + phospholipidSide 1 = ADP + phosphate + phospholipidSide 2.. The enzyme catalyses a beta-D-glucosyl-(1&lt;-&gt;1')-N-acylsphing-4-enine(out) + ATP + H2O = a beta-D-glucosyl-(1&lt;-&gt;1')-N-acylsphing-4-enine(in) + ADP + phosphate + H(+). Its function is as follows. Catalytic component of a P4-ATPase flippase complex, which catalyzes the hydrolysis of ATP coupled to the transport of glucosylceramide (GlcCer) from the outer to the inner leaflet of the plasma membrane. The sequence is that of Phospholipid-transporting ATPase VD (ATP10D) from Macaca fascicularis (Crab-eating macaque).